Here is a 277-residue protein sequence, read N- to C-terminus: MEMO1 family protein CTN_0605 (277 aa).

This sequence belongs to the MEMO1 family.

The chain is MEMO1 family protein CTN_0605 from Thermotoga neapolitana (strain ATCC 49049 / DSM 4359 / NBRC 107923 / NS-E).